The following is a 348-amino-acid chain: Protein RecA (348 aa).

69–76 (GPESSGKT) contacts ATP.

It belongs to the RecA family.

It is found in the cytoplasm. In terms of biological role, can catalyze the hydrolysis of ATP in the presence of single-stranded DNA, the ATP-dependent uptake of single-stranded DNA by duplex DNA, and the ATP-dependent hybridization of homologous single-stranded DNAs. It interacts with LexA causing its activation and leading to its autocatalytic cleavage. The protein is Protein RecA of Gluconacetobacter polyoxogenes (Acetobacter polyoxogenes).